Here is a 142-residue protein sequence, read N- to C-terminus: Myosin-2 essential light chain (142 aa).

EF-hand domains follow at residues 2–37 and 75–110; these read DDLA…LGQN and HTVE…LGER.

In terms of assembly, myosin is a hexamer of 2 heavy chains and 4 light chains (two regulatory light chains and two essential light chains).

It is found in the cytoplasm. It localises to the cytoskeleton. Functionally, required for cytokinesis and embryo elongation. May regulate myosin II complex formation and/or the association of myosin with actin. May be involved in the organization of mlc-4 and nmy-2 into bundles. This chain is Myosin-2 essential light chain, found in Caenorhabditis elegans.